A 340-amino-acid polypeptide reads, in one-letter code: Ketol-acid reductoisomerase (NADP(+)) (340 aa).

The 182-residue stretch at 1-182 (MRVYYDRDCD…GGGRSGIIET (182 aa)) folds into the KARI N-terminal Rossmann domain. Residues 24–27 (YGSQ), arginine 48, serine 51, serine 53, and 83–86 (DELQ) each bind NADP(+). Histidine 108 is a catalytic residue. Glycine 134 contacts NADP(+). A KARI C-terminal knotted domain is found at 183 to 329 (NFREECETDL…KELRGMMPWI (147 aa)). Mg(2+)-binding residues include aspartate 191, glutamate 195, glutamate 227, and glutamate 231. Serine 252 is a substrate binding site.

Belongs to the ketol-acid reductoisomerase family. Mg(2+) is required as a cofactor.

The catalysed reaction is (2R)-2,3-dihydroxy-3-methylbutanoate + NADP(+) = (2S)-2-acetolactate + NADPH + H(+). It carries out the reaction (2R,3R)-2,3-dihydroxy-3-methylpentanoate + NADP(+) = (S)-2-ethyl-2-hydroxy-3-oxobutanoate + NADPH + H(+). The protein operates within amino-acid biosynthesis; L-isoleucine biosynthesis; L-isoleucine from 2-oxobutanoate: step 2/4. It functions in the pathway amino-acid biosynthesis; L-valine biosynthesis; L-valine from pyruvate: step 2/4. In terms of biological role, involved in the biosynthesis of branched-chain amino acids (BCAA). Catalyzes an alkyl-migration followed by a ketol-acid reduction of (S)-2-acetolactate (S2AL) to yield (R)-2,3-dihydroxy-isovalerate. In the isomerase reaction, S2AL is rearranged via a Mg-dependent methyl migration to produce 3-hydroxy-3-methyl-2-ketobutyrate (HMKB). In the reductase reaction, this 2-ketoacid undergoes a metal-dependent reduction by NADPH to yield (R)-2,3-dihydroxy-isovalerate. The chain is Ketol-acid reductoisomerase (NADP(+)) from Dinoroseobacter shibae (strain DSM 16493 / NCIMB 14021 / DFL 12).